Here is an 820-residue protein sequence, read N- to C-terminus: G-type lectin S-receptor-like serine/threonine-protein kinase At1g11300 (820 aa).

The first 26 residues, 1–26 (MRLHESSSPFVCILVLSCFFLSVSLA), serve as a signal peptide directing secretion. The 124-residue stretch at 27–150 (QERAFFSGKL…SSDAYLWESF (124 aa)) folds into the Bulb-type lectin domain. The Extracellular segment spans residues 27–436 (QERAFFSGKL…SEIKTKDKRP (410 aa)). 10 N-linked (GlcNAc...) asparagine glycosylation sites follow: Asn-37, Asn-58, Asn-87, Asn-115, Asn-123, Asn-173, Asn-211, Asn-247, Asn-256, and Asn-282. The EGF-like; atypical domain occupies 290–326 (PATECDNYRRCGEFATCNPRKNPLCSCIRGFRPRNLI). 2 disulfides stabilise this stretch: Cys-294-Cys-306 and Cys-300-Cys-314. Residues Asn-332 and Asn-351 are each glycosylated (N-linked (GlcNAc...) asparagine). Positions 345-425 (CERQNNNGSA…SGLDLYIRLA (81 aa)) constitute a PAN domain. Cystine bridges form between Cys-379/Cys-400 and Cys-383/Cys-389. Asn-404 carries an N-linked (GlcNAc...) asparagine glycan. A helical transmembrane segment spans residues 437-457 (ILIGTILAGGIFVVAACVLLA). Residues 458–820 (RRIVMKKRAK…NVTITDVTGR (363 aa)) are Cytoplasmic-facing. A Protein kinase domain is found at 509–788 (FSLRNKLGQG…DIPEPKQPAF (280 aa)). Residues 515-523 (LGQGGFGPV) and Lys-537 each bind ATP. Residues 598–615 (RRAKLLDWKTRFNIINGI) form a caM-binding region. Residue Asp-634 is the Proton acceptor of the active site.

It belongs to the protein kinase superfamily. Ser/Thr protein kinase family.

Its subcellular location is the cell membrane. The catalysed reaction is L-seryl-[protein] + ATP = O-phospho-L-seryl-[protein] + ADP + H(+). The enzyme catalyses L-threonyl-[protein] + ATP = O-phospho-L-threonyl-[protein] + ADP + H(+). The chain is G-type lectin S-receptor-like serine/threonine-protein kinase At1g11300 from Arabidopsis thaliana (Mouse-ear cress).